The following is a 611-amino-acid chain: Protein spaetzle 3 (611 aa).

Positions 1-14 (MALTNFSLPFGALG) are cleaved as a signal peptide. N5 carries N-linked (GlcNAc...) asparagine glycosylation. Residues 57–322 (EYFKNNPYAP…NDKSNNNQMP (266 aa)) are disordered. Composition is skewed to low complexity over residues 104 to 120 (QQVQ…QHQQ), 127 to 153 (SVSF…LTQT), and 169 to 185 (PGQQ…QQKQ). Over residues 191 to 210 (GSASATFTKNSGSFSITSFG) the composition is skewed to polar residues. Pro residues predominate over residues 218–239 (PPQPQQPPPSQQQQPPPAPPPQ). Residues 288 to 306 (YDVEEGEEDEEEDGEEEGQ) are compositionally biased toward acidic residues. N-linked (GlcNAc...) asparagine glycosylation is found at N335 and N351. The interval 477–518 (KKRQAAAGGSRNRGGSAGGSGNGNTNANRQPGNKNGSSGTGR) is disordered. Residues 487–498 (RNRGGSAGGSGN) are compositionally biased toward gly residues. N511 carries an N-linked (GlcNAc...) asparagine glycan. The Spaetzle domain occupies 521–609 (ACESKIEIVT…LFPSCCVCRC (89 aa)). Intrachain disulfides connect C522–C573, C559–C605, and C567–C607.

In terms of assembly, homodimer; disulfide-linked.

Functionally, neurotrophin which may function as a ligand to the Toll-related receptor Tollo. Involved in a Tollo and JNK signaling pathway that positively regulates neuromuscular junction (NMJ) growth in presynaptic motorneurons. May function by activating Tollo to promote the phosphorylation of JNK. This Drosophila melanogaster (Fruit fly) protein is Protein spaetzle 3.